A 507-amino-acid chain; its full sequence is MITASTSVFGGLILAFIFSLLYKNKKTRIPAEIDRVRTGGFLAHIRAFGCRLGTRVDDIRNGYNKFNKNGKPFVIQDSTFIPQVVIPPQYLGWLKEQPEKALSAETVRLEQLGLRYLVPSSDPEMVHLLTDVVCRYLTRNFQRVQERLYEELHMSTDEIMGLEATEWRQICLHEAMETILRRMISCVLIGLPWCRDEECLKSWTGFLHCMAIAGTILGAVTPWFLRPLLGLLLKPPVGYMRRRSLRYLTPIFTERWKKIEKHEKSSLTTRELPDDFVTWCIQEVRNGAAEVTMLDLLSADPTIGYWEKLVEEATTAFRTDEDWIHAGTVSKLAYTDSAIRESLRRNPFSIRNVTREVIGKDGLTLPSGTRLPQGTWITTALANIHHDARFYSNPTEYQPFRFVARDAFHTEGKEGSEKVLQPSEAILTSTIDERLLTFGYGRRACPGRWFASHILKMLIAYITINYDIQPLTGPPKKVKFADFTVPSPSIKIIVRRKNLAYLRQRER.

2 consecutive transmembrane segments (helical) span residues 1-21 and 205-225; these read MITA…FSLL and GFLH…PWFL. Asparagine 352 carries an N-linked (GlcNAc...) asparagine glycan. Residue cysteine 445 coordinates heme.

The protein belongs to the cytochrome P450 family. Requires heme as cofactor.

Its subcellular location is the membrane. Its pathway is secondary metabolite biosynthesis. Functionally, cytochrome P450 monooxygenase; part of the gene cluster that mediates the biosynthesis of the indole diterpenes nodulisporic acids (NA). Nodulisporic acid A (NAA) and its chemically modified derivatives are of particular significance because of their highly potent insecticidal activity against blood-feeding arthropods and lack of observable adverse effects on mammals, in particular the tremogenicity associated with the paspaline-derived IDTs is not observed. The geranylgeranyl diphosphate (GGPP) synthase ggs1, localized outside of the cluster, is proposed to catalyze the first step in nodulisporic acid biosynthesis via conversion of farnesyl pyrophosphate and isopentyl pyrophosphate into geranylgeranyl pyrophosphate (GGPP). Condensation of indole-3-glycerol phosphate with GGPP by the prenyl transferase nodC then forms 3-geranylgeranylindole (3-GGI). Epoxidation by the FAD-dependent monooxygenase nodM leads to a single-epoxidized-GGI that is substrate of the terpene cyclase nodB for cyclization to yield emindole SB. The terminal methyl carbon, C28, of emindole SB is then oxidized by the cytochrome P450 monooxygenase nodW to produce nodulisporic acid F (NAF), the pentacyclic core of NAA. NAF is converted to nodulisporic acid E (NAE) via prenylation. This step is probably performed by one of the indole diterpene prenyltransferases nodD1 or nodD2. Several oxidation steps performed by the FAD-linked oxidoreductase nodO and one of the cytochrome P450 monooxygenase nodR, nodX or nodZ further convert NAE to nodulisporic acid D (NAD). NAD is substrate of cytochrome P450 monooxygenase nodJ to produce the precursor of nodulisporic acid C (NAC), converted to NAC by one of the indole diterpene prenyltransferases nodD1 or nodD2. The FAD-dependent monooxygenase nodY2 then oxidizes NAC to nodulisporic acid B (NAB). Finally NAB is converted to NAA by one of the cytochrome P450 monooxygenases nodR, nodX or nodZ. The protein is Cytochrome P450 monooxygenase nodZ of Hypoxylon pulicicidum.